The chain runs to 30 residues: Cycloviolin-C (30 aa).

Residues 1–30 (GIPCGESCVFIPCLTTVAGCSCKNKVCYRN) constitute a cross-link (cyclopeptide (Gly-Asn)). 3 cysteine pairs are disulfide-bonded: Cys4–Cys20, Cys8–Cys22, and Cys13–Cys27.

This is a cyclic peptide.

In terms of biological role, probably participates in a plant defense mechanism. Has anti-HIV activity. This chain is Cycloviolin-C, found in Leonia cymosa (Sacha uba).